The primary structure comprises 545 residues: MSAKDVKFGVDARDKMLRGVDILANAVKVTLGPKGRNVVLEKSFGAPRITKDGVTVAKEIELDDKFENMGAQMVREVASKSADAAGDGTTTATVLAQAIVKEGAKSVAAGMNPMDLKRGIDLAVEAVVADLSRNSKKVTSNEEIAQVGTISANGDSEIGKFLADAMKKVGNEGVITVEEAKSLETELDVVEGMQFDRGYISPYFVTNAEKMRVEMDDAYILINEKKLSSLNELLPLLEAVVQTGKPLVIVAEDVEGEALATLVVNRLRGGLKVAAVKAPGFGDRRKAMLQDIAILTGGQAISEDLGIKLENVTLQMLGRAKKVMIDKENTTIVNGAGKKADIEARVAQIKAQIEETTSDYDREKLQERLAKLAGGVAVIRVGGATEVEVKERKDRVDDAMHATRAAVEEGIVPGGGVALLRASEQLKRIKTQNDDQKTGVEIVRKALSAPARQIAINAGEDGSVIVGKILEKEQYSYGFDSQTGDYGNLISKGIIDPTKVVRTAIQNAASVASLLITTEAMVAELPKKNSPAPAMPGGGMGGMDF.

ATP contacts are provided by residues 30–33 (TLGP), Lys-51, 87–91 (DGTTT), Gly-415, and Asp-496.

The protein belongs to the chaperonin (HSP60) family. As to quaternary structure, forms a cylinder of 14 subunits composed of two heptameric rings stacked back-to-back. Interacts with the co-chaperonin GroES.

Its subcellular location is the cytoplasm. The enzyme catalyses ATP + H2O + a folded polypeptide = ADP + phosphate + an unfolded polypeptide.. Its function is as follows. Together with its co-chaperonin GroES, plays an essential role in assisting protein folding. The GroEL-GroES system forms a nano-cage that allows encapsulation of the non-native substrate proteins and provides a physical environment optimized to promote and accelerate protein folding. The sequence is that of Chaperonin GroEL 2 from Nitrobacter winogradskyi (strain ATCC 25391 / DSM 10237 / CIP 104748 / NCIMB 11846 / Nb-255).